Reading from the N-terminus, the 188-residue chain is MTEARHQVNFITGNANKLSEVKAILEPAISVTNQSLDLVEIQGTLEEVTIDKCRRAAELVGGPVLVEDTCLCFDALQDLPGPYIKWFLGSIGHEGLNNMLLAYEDKGAKAVCTFGYSAGPGHEPILFQGITHGKIVPARGPSNFGWDPIFEYEGKTYAEMDKAEKNKISHRSRALAKLQEWFAKEMTA.

12-17 (TGNANK) serves as a coordination point for ITP. A Mg(2+)-binding site is contributed by Glu40. Residues Lys52, 68–69 (DT), Lys85, 144–147 (FGWD), Lys165, and 170–171 (HR) each bind ITP.

Belongs to the HAM1 NTPase family. In terms of assembly, homodimer. Mg(2+) serves as cofactor. The cofactor is Mn(2+).

It is found in the cytoplasm. The protein localises to the nucleus. The enzyme catalyses ITP + H2O = IMP + diphosphate + H(+). It carries out the reaction dITP + H2O = dIMP + diphosphate + H(+). It catalyses the reaction XTP + H2O = XMP + diphosphate + H(+). Its function is as follows. Pyrophosphatase that hydrolyzes non-canonical purine nucleotides such as inosine triphosphate (ITP), deoxyinosine triphosphate (dITP) or xanthosine 5'-triphosphate (XTP) to their respective monophosphate derivatives. The enzyme does not distinguish between the deoxy- and ribose forms. Probably excludes non-canonical purines from RNA and DNA precursor pools, thus preventing their incorporation into RNA and DNA and avoiding chromosomal lesions. This chain is Inosine triphosphate pyrophosphatase, found in Podospora anserina (strain S / ATCC MYA-4624 / DSM 980 / FGSC 10383) (Pleurage anserina).